A 232-amino-acid polypeptide reads, in one-letter code: Ion-translocating oxidoreductase complex subunit E (232 aa).

Helical transmembrane passes span 12–31 (LWRN…LLAV), 39–59 (LGLG…VSAL), 69–89 (IPIY…LINA), 92–112 (FGLY…CIVI), 125–145 (ALAA…LLLL), and 182–202 (PFLL…MLVG).

Belongs to the NqrDE/RnfAE family. In terms of assembly, the complex is composed of six subunits: RnfA, RnfB, RnfC, RnfD, RnfE and RnfG.

Its subcellular location is the cell inner membrane. Its function is as follows. Part of a membrane-bound complex that couples electron transfer with translocation of ions across the membrane. This Sodalis glossinidius (strain morsitans) protein is Ion-translocating oxidoreductase complex subunit E.